The chain runs to 370 residues: uncharacterized protein (370 aa).

Asp152, His154, Asp184, Asn215, His306, and His308 together coordinate a divalent metal cation.

This sequence belongs to the metallophosphoesterase superfamily. The cofactor is a divalent metal cation.

This is an uncharacterized protein from Helicobacter pylori (strain J99 / ATCC 700824) (Campylobacter pylori J99).